The following is a 165-amino-acid chain: Protein SprT (165 aa).

The region spanning 19 to 163 (REKLAQANLK…RCVKCGEPLV (145 aa)) is the SprT-like domain. Residue His78 participates in Zn(2+) binding. The active site involves Glu79. Zn(2+) is bound at residue His82.

It belongs to the SprT family. The cofactor is Zn(2+).

The protein resides in the cytoplasm. In Enterobacter sp. (strain 638), this protein is Protein SprT.